The following is a 783-amino-acid chain: ATP-dependent zinc metalloprotease FtsH (783 aa).

Residues 1-16 show a composition bias toward low complexity; that stretch reads MSETPNTNEQNNPNNQ. A disordered region spans residues 1 to 79; that stretch reads MSETPNTNEQ…DKEEDFASRL (79 aa). Residues 1–86 are Cytoplasmic-facing; it reads MSETPNTNEQ…SRLNTRPPQR (86 aa). Residues 35 to 61 show a composition bias toward basic and acidic residues; that stretch reads MPERPERHNQADGAPKRPGDDDRKSER. A helical membrane pass occupies residues 87–107; sequence ASIITIIIIFLVAFFIGSQMM. At 108-233 the chain is on the extracellular side; the sequence is NMVHGEETDD…EYQVTLPSNV (126 aa). Residues 234–254 traverse the membrane as a helical segment; that stretch reads TEILISVLPMLLFAGLLIYFF. The Cytoplasmic portion of the chain corresponds to 255-783; that stretch reads SQMSKANNSQ…APQPPAAPQQ (529 aa). 325 to 332 provides a ligand contact to ATP; it reads GPPGTGKT. Zn(2+) is bound at residue histidine 547. Glutamate 548 is an active-site residue. Zn(2+)-binding residues include histidine 551 and aspartate 623. Residues 738 to 771 show a composition bias toward low complexity; sequence EAAAKAADQAEQPQVEAEPVAQVATPAAPVAPAV. A disordered region spans residues 738 to 783; the sequence is EAAAKAADQAEQPQVEAEPVAQVATPAAPVAPAVPEAPQPPAAPQQ. The span at 772–783 shows a compositional bias: pro residues; the sequence is PEAPQPPAAPQQ.

In the central section; belongs to the AAA ATPase family. It in the C-terminal section; belongs to the peptidase M41 family. In terms of assembly, homohexamer. Requires Zn(2+) as cofactor.

It localises to the cell membrane. Acts as a processive, ATP-dependent zinc metallopeptidase for both cytoplasmic and membrane proteins. Plays a role in the quality control of integral membrane proteins. This chain is ATP-dependent zinc metalloprotease FtsH, found in Slackia heliotrinireducens (strain ATCC 29202 / DSM 20476 / NCTC 11029 / RHS 1) (Peptococcus heliotrinreducens).